A 621-amino-acid chain; its full sequence is tRNA 5-methylaminomethyl-2-thiouridine biosynthesis bifunctional protein MnmC (621 aa).

A tRNA (mnm(5)s(2)U34)-methyltransferase region spans residues 1–222; sequence MKNANLSFKG…KRQMSSAVLE (222 aa). The tract at residues 250–621 is FAD-dependent cmnm(5)s(2)U34 oxidoreductase; sequence IGTGVAGLAT…LIRKLKKGLK (372 aa).

This sequence in the N-terminal section; belongs to the methyltransferase superfamily. tRNA (mnm(5)s(2)U34)-methyltransferase family. The protein in the C-terminal section; belongs to the DAO family. FAD serves as cofactor.

It is found in the cytoplasm. It catalyses the reaction 5-aminomethyl-2-thiouridine(34) in tRNA + S-adenosyl-L-methionine = 5-methylaminomethyl-2-thiouridine(34) in tRNA + S-adenosyl-L-homocysteine + H(+). Catalyzes the last two steps in the biosynthesis of 5-methylaminomethyl-2-thiouridine (mnm(5)s(2)U) at the wobble position (U34) in tRNA. Catalyzes the FAD-dependent demodification of cmnm(5)s(2)U34 to nm(5)s(2)U34, followed by the transfer of a methyl group from S-adenosyl-L-methionine to nm(5)s(2)U34, to form mnm(5)s(2)U34. The protein is tRNA 5-methylaminomethyl-2-thiouridine biosynthesis bifunctional protein MnmC of Campylobacter concisus (strain 13826).